The chain runs to 140 residues: Large ribosomal subunit protein bL17 (140 aa).

Residues 120–140 form a disordered region; the sequence is EDAKGQDSGPVMVDEDDFAEA.

The protein belongs to the bacterial ribosomal protein bL17 family. In terms of assembly, part of the 50S ribosomal subunit. Contacts protein L32.

This chain is Large ribosomal subunit protein bL17, found in Erythrobacter litoralis (strain HTCC2594).